Here is a 372-residue protein sequence, read N- to C-terminus: Inner membrane protein YbiR (372 aa).

At 1–13 the chain is on the periplasmic side; it reads MSLPFLRTLQGDR. 2 helical membrane passes run 14 to 34 and 35 to 55; these read FFQLLILVGIGLSFFVPFAPK and SWPAAIDWHTIITLSGLMLLT. The Periplasmic portion of the chain corresponds to 56 to 85; the sequence is KGVELSGYFDVLGRKMVRRFATERRLAMFM. A helical transmembrane segment spans residues 86-106; it reads VLAAALLSTFLTNDVALFIVV. The Cytoplasmic segment spans residues 107–122; the sequence is PLTITLKRLCEIPVNR. The helical transmembrane segment at 123–143 threads the bilayer; the sequence is LIIFEALAVNAGSLLTPIGNP. Over 144–155 the chain is Periplasmic; that stretch reads QNILIWGRSGLS. A helical transmembrane segment spans residues 156–176; that stretch reads FAGFIAQMAPLAGAMMLTLLL. At 177–208 the chain is on the cytoplasmic side; the sequence is LCWCCFPGKAMQYHTGVQTPEWKPRLVWSCLG. Residues 209 to 229 traverse the membrane as a helical segment; the sequence is LYIVFLTALEFKQELWGLVIV. Residues 230–247 are Periplasmic-facing; that stretch reads AAGFALLARRVVLSVDWT. A helical transmembrane segment spans residues 248 to 268; that stretch reads LLLVFMAMFIDVHLLTQLPAL. Residues 269–283 are Cytoplasmic-facing; it reads QGVLGNVSHLSEPGL. A helical membrane pass occupies residues 284-304; the sequence is WLTAIGLSQVISNVPSTILLL. At 305–309 the chain is on the periplasmic side; the sequence is NYVPP. A helical membrane pass occupies residues 310–330; it reads SLLLVWAVNVGGFGLLPGSLA. At 331–348 the chain is on the cytoplasmic side; the sequence is NLIALRMANDRRIWWRFH. A helical transmembrane segment spans residues 349-369; it reads LYSIPMLLWAALVGYVLLVIL. The Periplasmic segment spans residues 370–372; the sequence is PAN.

It belongs to the CitM (TC 2.A.11) transporter family.

It localises to the cell inner membrane. The protein is Inner membrane protein YbiR (ybiR) of Escherichia coli (strain K12).